A 148-amino-acid chain; its full sequence is Cytochrome c-type biogenesis protein CcmE (148 aa).

Residues 1–7 are Cytoplasmic-facing; that stretch reads MKPRNRR. A helical; Signal-anchor for type II membrane protein membrane pass occupies residues 8 to 28; that stretch reads IALIVAGLSALGIATALVLNA. Topologically, residues 29-148 are periplasmic; the sequence is FQSNLVFFFT…VQKKPASRKP (120 aa). Heme-binding residues include H123 and Y127. The tract at residues 128-148 is disordered; that stretch reads MPPEAQHALDEVQKKPASRKP.

It belongs to the CcmE/CycJ family.

It localises to the cell inner membrane. Its function is as follows. Heme chaperone required for the biogenesis of c-type cytochromes. Transiently binds heme delivered by CcmC and transfers the heme to apo-cytochromes in a process facilitated by CcmF and CcmH. In Pseudomonas aeruginosa, this protein is Cytochrome c-type biogenesis protein CcmE.